The primary structure comprises 194 residues: Large ribosomal subunit protein uL10 (194 aa).

The span at 172-187 shows a compositional bias: low complexity; the sequence is EGGAAEAPAEAATEAP. Positions 172–194 are disordered; that stretch reads EGGAAEAPAEAATEAPAEAEAES.

This sequence belongs to the universal ribosomal protein uL10 family. Part of the ribosomal stalk of the 50S ribosomal subunit. The N-terminus interacts with L11 and the large rRNA to form the base of the stalk. The C-terminus forms an elongated spine to which L12 dimers bind in a sequential fashion forming a multimeric L10(L12)X complex.

Functionally, forms part of the ribosomal stalk, playing a central role in the interaction of the ribosome with GTP-bound translation factors. The sequence is that of Large ribosomal subunit protein uL10 from Rhodococcus erythropolis (strain PR4 / NBRC 100887).